We begin with the raw amino-acid sequence, 256 residues long: Zinc import ATP-binding protein ZnuC (256 aa).

The region spanning I6–G221 is the ABC transporter domain. G38–S45 contacts ATP. The tract at residues H237 to R256 is disordered.

It belongs to the ABC transporter superfamily. Zinc importer (TC 3.A.1.15.5) family. The complex is composed of two ATP-binding proteins (ZnuC), two transmembrane proteins (ZnuB) and a solute-binding protein (ZnuA).

The protein resides in the cell inner membrane. It catalyses the reaction Zn(2+)(out) + ATP(in) + H2O(in) = Zn(2+)(in) + ADP(in) + phosphate(in) + H(+)(in). In terms of biological role, part of the ABC transporter complex ZnuABC involved in zinc import. Responsible for energy coupling to the transport system. The protein is Zinc import ATP-binding protein ZnuC of Ruegeria pomeroyi (strain ATCC 700808 / DSM 15171 / DSS-3) (Silicibacter pomeroyi).